The following is a 217-amino-acid chain: 7-cyano-7-deazaguanine synthase (217 aa).

10-20 (FSGGQDSTTCL) is an ATP binding site. Zn(2+)-binding residues include Cys185, Cys194, Cys197, and Cys200.

Belongs to the QueC family. Homodimer. Zn(2+) serves as cofactor.

It catalyses the reaction 7-carboxy-7-deazaguanine + NH4(+) + ATP = 7-cyano-7-deazaguanine + ADP + phosphate + H2O + H(+). It functions in the pathway purine metabolism; 7-cyano-7-deazaguanine biosynthesis. Catalyzes the ATP-dependent conversion of 7-carboxy-7-deazaguanine (CDG) to 7-cyano-7-deazaguanine (preQ(0)). The polypeptide is 7-cyano-7-deazaguanine synthase (Streptococcus mutans serotype c (strain ATCC 700610 / UA159)).